The following is a 325-amino-acid chain: Glutarate 2-hydroxylase (325 aa).

3 residues coordinate Fe cation: His160, Asp162, and His292.

The protein belongs to the glutarate hydroxylase family. In terms of assembly, homotetramer. It depends on Fe(2+) as a cofactor.

It catalyses the reaction glutarate + 2-oxoglutarate + O2 = (S)-2-hydroxyglutarate + succinate + CO2. It participates in amino-acid degradation. Its function is as follows. Acts as an alpha-ketoglutarate-dependent dioxygenase catalyzing hydroxylation of glutarate (GA) to L-2-hydroxyglutarate (L2HG). Functions in a L-lysine degradation pathway that proceeds via cadaverine, glutarate and L-2-hydroxyglutarate. This is Glutarate 2-hydroxylase from Klebsiella pneumoniae (strain 342).